Reading from the N-terminus, the 370-residue chain is Protein RecA (370 aa).

The tract at residues 1-20 is disordered; it reads MSFEERRKKDSKESSSKEKD. 78–85 is a binding site for ATP; the sequence is GPESSGKT.

The protein belongs to the RecA family.

The protein localises to the cytoplasm. Can catalyze the hydrolysis of ATP in the presence of single-stranded DNA, the ATP-dependent uptake of single-stranded DNA by duplex DNA, and the ATP-dependent hybridization of homologous single-stranded DNAs. It interacts with LexA causing its activation and leading to its autocatalytic cleavage. The sequence is that of Protein RecA from Prochlorococcus marinus (strain MIT 9515).